A 150-amino-acid chain; its full sequence is Catabolic 3-dehydroquinase (150 aa).

Residue Tyr-24 is the Proton acceptor of the active site. Substrate-binding residues include Asn-75, His-81, and Asp-88. The active-site Proton donor is the His-101. Substrate is bound by residues 102–103 (VS) and Arg-112.

Belongs to the type-II 3-dehydroquinase family. Homododecamer. Adopts a ring-like structure, composed of an arrangement of two hexameric rings stacked on top of one another.

It catalyses the reaction 3-dehydroquinate = 3-dehydroshikimate + H2O. The protein operates within aromatic compound metabolism; 3,4-dihydroxybenzoate biosynthesis; 3,4-dihydroxybenzoate from 3-dehydroquinate: step 1/2. In terms of biological role, is involved in the catabolism of quinate. Allows the utilization of quinate as carbon source via the beta-ketoadipate pathway. The polypeptide is Catabolic 3-dehydroquinase (Aspergillus clavatus (strain ATCC 1007 / CBS 513.65 / DSM 816 / NCTC 3887 / NRRL 1 / QM 1276 / 107)).